Consider the following 552-residue polypeptide: CTP synthase (552 aa).

Positions methionine 1–leucine 270 are amidoligase domain. Serine 13 lines the CTP pocket. Residue serine 13 participates in UTP binding. ATP-binding positions include serine 14 to isoleucine 19 and aspartate 71. Mg(2+) is bound by residues aspartate 71 and glutamate 144. Residues aspartate 151 to glutamate 153, lysine 191 to glutamine 196, and lysine 227 contribute to the CTP site. Residues lysine 191–glutamine 196 and lysine 227 contribute to the UTP site. A Glutamine amidotransferase type-1 domain is found at threonine 295–alanine 547. Glycine 356 serves as a coordination point for L-glutamine. Residue cysteine 383 is the Nucleophile; for glutamine hydrolysis of the active site. Residues leucine 384–glutamine 387, glutamate 407, and arginine 473 contribute to the L-glutamine site. Residues histidine 520 and glutamate 522 contribute to the active site.

The protein belongs to the CTP synthase family. In terms of assembly, homotetramer.

It carries out the reaction UTP + L-glutamine + ATP + H2O = CTP + L-glutamate + ADP + phosphate + 2 H(+). It catalyses the reaction L-glutamine + H2O = L-glutamate + NH4(+). The catalysed reaction is UTP + NH4(+) + ATP = CTP + ADP + phosphate + 2 H(+). It functions in the pathway pyrimidine metabolism; CTP biosynthesis via de novo pathway; CTP from UDP: step 2/2. Allosterically activated by GTP, when glutamine is the substrate; GTP has no effect on the reaction when ammonia is the substrate. The allosteric effector GTP functions by stabilizing the protein conformation that binds the tetrahedral intermediate(s) formed during glutamine hydrolysis. Inhibited by the product CTP, via allosteric rather than competitive inhibition. Catalyzes the ATP-dependent amination of UTP to CTP with either L-glutamine or ammonia as the source of nitrogen. Regulates intracellular CTP levels through interactions with the four ribonucleotide triphosphates. The chain is CTP synthase from Burkholderia vietnamiensis (strain G4 / LMG 22486) (Burkholderia cepacia (strain R1808)).